The following is a 220-amino-acid chain: Cytidylate kinase (220 aa).

Residue 9-17 (GPAASGKST) participates in ATP binding.

The protein belongs to the cytidylate kinase family. Type 1 subfamily.

It localises to the cytoplasm. The catalysed reaction is CMP + ATP = CDP + ADP. The enzyme catalyses dCMP + ATP = dCDP + ADP. This is Cytidylate kinase from Thermotoga petrophila (strain ATCC BAA-488 / DSM 13995 / JCM 10881 / RKU-1).